The primary structure comprises 443 residues: F-box only protein 39 (443 aa).

Positions 13 to 59 constitute an F-box domain; the sequence is QSCWATLPDVCLRRVFWWLGDRDRSRAALVCRKWNQIMYSADLWRYR.

Directly interacts with SKP1 and CUL1.

In terms of biological role, substrate-recognition component of the SCF (SKP1-CUL1-F-box protein)-type E3 ubiquitin ligase complex. The chain is F-box only protein 39 (Fbxo39) from Mus musculus (Mouse).